The chain runs to 275 residues: ORF2/4 protein (275 aa).

Disordered regions lie at residues 44–103 (LGRP…DGEL) and 116–207 (ADPQ…PPPT). Residues 79-98 (GTGGDAAGGEAGGSRGAGDG) are compositionally biased toward gly residues. Residues 129–139 (GQRKNARKRLR) show a composition bias toward basic residues. Residues 170–188 (TRTTSPAAPAAATPQSPAR) are compositionally biased toward low complexity.

This Torque teno virus (isolate Human/Finland/Hel32/2002) (TTV) protein is ORF2/4 protein.